The sequence spans 309 residues: Replication factor C subunit 4 (309 aa).

ATP-binding positions include Val5, Val17, 42–50 (GPPGTGKTT), Asn134, and Arg192.

Belongs to the activator 1 small subunits family. Component of the replication factor C (RFC) complex.

It is found in the nucleus. Its function is as follows. Component of ATP-dependent clamp loader (RFC and RFC-like) complexes for DNA clamps. During a clamp loading circle, the RFC:clamp complex binds to DNA and the recognition of the double-stranded/single-stranded junction stimulates ATP hydrolysis by RFC. The complex presumably provides bipartite ATP sites in which one subunit supplies a catalytic site for hydrolysis of ATP bound to the neighboring subunit. Dissociation of RFC from the clamp leaves the clamp encircling DNA. Component of the replication factor C (RFC or activator 1) complex which acts during elongation of primed DNA templates by DNA polymerase delta and epsilon. RFC has an essential but redundant activity in sister chromatid cohesion establishment. This chain is Replication factor C subunit 4 (RFC4), found in Encephalitozoon cuniculi (strain GB-M1) (Microsporidian parasite).